The following is a 181-amino-acid chain: Ion-translocating oxidoreductase complex subunit B (181 aa).

The tract at residues 1–26 (MLEAVSAVMSLGGMALFAGLGLGYAA) is hydrophobic. Positions 32–90 (EADPVVEKLEALLPATNCGMCGHPGCGPYAQAITEGEAINLCTPGGKAVMESIAAMLGV) constitute a 4Fe-4S domain. Positions 49, 52, 57, 73, 110, 113, 116, 120, 140, 143, 146, and 150 each coordinate [4Fe-4S] cluster. 4Fe-4S ferredoxin-type domains lie at 101–130 (KVAY…GANK) and 131–160 (QSHT…MQPV).

The protein belongs to the 4Fe4S bacterial-type ferredoxin family. RnfB subfamily. As to quaternary structure, the complex is composed of six subunits: RnfA, RnfB, RnfC, RnfD, RnfE and RnfG. Requires [4Fe-4S] cluster as cofactor.

Its subcellular location is the cell inner membrane. Functionally, part of a membrane-bound complex that couples electron transfer with translocation of ions across the membrane. The protein is Ion-translocating oxidoreductase complex subunit B of Magnetococcus marinus (strain ATCC BAA-1437 / JCM 17883 / MC-1).